A 146-amino-acid chain; its full sequence is MAFHILPTFERGNEKGAVIGRVKHRRENPLEYEIKVVKKGSVKVFVGNKGVFVIEDDLAKEIIKALWEKYVRETYGRRKPKTNKEIVEHPIEVRESFLINFFKEKGFITSFKSCMYLIEGTSSDESTIKDLILLTKKIKEKVTKTT.

This is an uncharacterized protein from Aquifex aeolicus (strain VF5).